The chain runs to 105 residues: Large ribosomal subunit protein bL21 (105 aa).

The protein belongs to the bacterial ribosomal protein bL21 family. In terms of assembly, part of the 50S ribosomal subunit. Contacts protein L20.

Its function is as follows. This protein binds to 23S rRNA in the presence of protein L20. The sequence is that of Large ribosomal subunit protein bL21 from Parabacteroides distasonis (strain ATCC 8503 / DSM 20701 / CIP 104284 / JCM 5825 / NCTC 11152).